We begin with the raw amino-acid sequence, 278 residues long: HTH-type transcriptional regulator HdfR (278 aa).

The HTH lysR-type domain maps to 1 to 58 (MDTELLKTFLEVSRTRHFGRAAEALYLTQSAVSFRIRQLENQLGVNLFTRHRNNIRLT). Residues 18–37 (FGRAAEALYLTQSAVSFRIR) constitute a DNA-binding region (H-T-H motif).

It belongs to the LysR transcriptional regulatory family.

Functionally, negatively regulates the transcription of the flagellar master operon flhDC by binding to the upstream region of the operon. This Salmonella schwarzengrund (strain CVM19633) protein is HTH-type transcriptional regulator HdfR.